A 540-amino-acid chain; its full sequence is GMP synthase [glutamine-hydrolyzing] (540 aa).

In terms of domain architecture, Glutamine amidotransferase type-1 spans 24-217; the sequence is KILIVDFGSQ…VRKVAGLTGD (194 aa). Cys101 acts as the Nucleophile in catalysis. Residues His191 and Glu193 contribute to the active site. A GMPS ATP-PPase domain is found at 218-415; sequence WTMRAFREEA…LGLPEIFVGR (198 aa). Residue 245–251 participates in ATP binding; the sequence is SGGVDSS.

Homodimer.

The enzyme catalyses XMP + L-glutamine + ATP + H2O = GMP + L-glutamate + AMP + diphosphate + 2 H(+). It functions in the pathway purine metabolism; GMP biosynthesis; GMP from XMP (L-Gln route): step 1/1. Functionally, catalyzes the synthesis of GMP from XMP. This chain is GMP synthase [glutamine-hydrolyzing], found in Nitrobacter hamburgensis (strain DSM 10229 / NCIMB 13809 / X14).